The chain runs to 139 residues: Ribulose bisphosphate carboxylase small subunit (139 aa).

This sequence belongs to the RuBisCO small chain family. As to quaternary structure, heterohexadecamer of 8 large and 8 small subunits.

The protein resides in the plastid. Its subcellular location is the chloroplast. Functionally, ruBisCO catalyzes two reactions: the carboxylation of D-ribulose 1,5-bisphosphate, the primary event in carbon dioxide fixation, as well as the oxidative fragmentation of the pentose substrate in the photorespiration process. Both reactions occur simultaneously and in competition at the same active site. Although the small subunit is not catalytic it is essential for maximal activity. This is Ribulose bisphosphate carboxylase small subunit from Pylaiella littoralis (Seaweed).